The sequence spans 79 residues: DNA-directed RNA polymerase subunit omega (79 aa).

This sequence belongs to the RNA polymerase subunit omega family. The RNAP catalytic core consists of 2 alpha, 1 beta, 1 beta' and 1 omega subunit. When a sigma factor is associated with the core the holoenzyme is formed, which can initiate transcription.

The enzyme catalyses RNA(n) + a ribonucleoside 5'-triphosphate = RNA(n+1) + diphosphate. In terms of biological role, promotes RNA polymerase assembly. Latches the N- and C-terminal regions of the beta' subunit thereby facilitating its interaction with the beta and alpha subunits. The chain is DNA-directed RNA polymerase subunit omega from Thermotoga petrophila (strain ATCC BAA-488 / DSM 13995 / JCM 10881 / RKU-1).